The chain runs to 159 residues: Transcriptional repressor NrdR (159 aa).

The segment at 3-34 (CPFCRHDDTQVVDSRVSEDGAAIRRRRRCSAC) is a zinc-finger region. In terms of domain architecture, ATP-cone spans 49–139 (PAVVKKDGSR…VYRRFEDVSE (91 aa)).

It belongs to the NrdR family. It depends on Zn(2+) as a cofactor.

Its function is as follows. Negatively regulates transcription of bacterial ribonucleotide reductase nrd genes and operons by binding to NrdR-boxes. This Burkholderia thailandensis (strain ATCC 700388 / DSM 13276 / CCUG 48851 / CIP 106301 / E264) protein is Transcriptional repressor NrdR.